A 169-amino-acid polypeptide reads, in one-letter code: Histone H1.9 (169 aa).

Polar residues-rich tracts occupy residues Met1–Ser10 and Asp19–Asn36. The interval Met1–Asn36 is disordered. The H15 domain maps to Arg43–Lys116. Ser62 and Ser65 each carry phosphoserine. Basic residues predominate over residues Gln118 to Ser142. The disordered stretch occupies residues Gln118 to Asn154.

This sequence belongs to the histone H1/H5 family.

It localises to the nucleus. The protein resides in the chromosome. Its function is as follows. DNA-binding protein that may be implicated in chromatin remodeling and/or transcriptional regulation during spermiogenesis, the process of spermatid maturation into spermatozoa. The chain is Histone H1.9 from Rattus norvegicus (Rat).